Consider the following 216-residue polypeptide: Cyclo(L-leucyl-L-leucyl) synthase (216 aa).

The Nucleophile role is filled by serine 14. Substrate is bound by residues asparagine 17, 155 to 159 (YIFDE), and tyrosine 179.

It belongs to the CDPS family.

The enzyme catalyses 2 L-leucyl-tRNA(Leu) = cyclo(L-leucyl-L-leucyl) + 2 tRNA(Leu) + 2 H(+). It uses activated amino acids in the form of aminoacyl-tRNAs (aa-tRNAs) as substrates to catalyze the ATP-independent formation of cyclodipeptides which are intermediates in diketopiperazine (DKP) biosynthetic pathways. Catalyzes the formation of cyclo(L-Leu-L-Leu) (cLL) from L-leucyl-tRNA(Leu). Can incorporate various nonpolar residues, such as L-leucine and L-methionine, into cyclodipeptides. This Corynebacterium jeikeium (strain K411) protein is Cyclo(L-leucyl-L-leucyl) synthase.